A 427-amino-acid chain; its full sequence is Adenylosuccinate synthetase (427 aa).

GTP-binding positions include 12-18 and 40-42; these read GDEGKGK and GHT. Asp-13 serves as the catalytic Proton acceptor. 2 residues coordinate Mg(2+): Asp-13 and Gly-40. IMP contacts are provided by residues 13-16, 38-41, Thr-128, Arg-142, Gln-223, Thr-238, and Arg-302; these read DEGK and NAGH. Catalysis depends on His-41, which acts as the Proton donor. 298-304 is a binding site for substrate; it reads TVTGRAR. GTP contacts are provided by residues Arg-304, 330–332, and 412–414; these read RLD and SVG.

This sequence belongs to the adenylosuccinate synthetase family. As to quaternary structure, homodimer. Requires Mg(2+) as cofactor.

It is found in the cytoplasm. The enzyme catalyses IMP + L-aspartate + GTP = N(6)-(1,2-dicarboxyethyl)-AMP + GDP + phosphate + 2 H(+). The protein operates within purine metabolism; AMP biosynthesis via de novo pathway; AMP from IMP: step 1/2. Its function is as follows. Plays an important role in the de novo pathway of purine nucleotide biosynthesis. Catalyzes the first committed step in the biosynthesis of AMP from IMP. The protein is Adenylosuccinate synthetase of Brachyspira hyodysenteriae (strain ATCC 49526 / WA1).